A 154-amino-acid polypeptide reads, in one-letter code: Large ribosomal subunit protein uL22c (154 aa).

Belongs to the universal ribosomal protein uL22 family. In terms of assembly, part of the 50S ribosomal subunit.

The protein localises to the plastid. It is found in the chloroplast. Its function is as follows. This protein binds specifically to 23S rRNA. The globular domain of the protein is located near the polypeptide exit tunnel on the outside of the subunit, while an extended beta-hairpin is found that lines the wall of the exit tunnel in the center of the 70S ribosome. In Guizotia abyssinica (Niger), this protein is Large ribosomal subunit protein uL22c (rpl22).